A 208-amino-acid polypeptide reads, in one-letter code: Casparian strip membrane protein 2 (208 aa).

The interval 1–23 (MDSKSGRSESAINIPESNSTKHK) is disordered. The Cytoplasmic portion of the chain corresponds to 1-46 (MDSKSGRSESAINIPESNSTKHKSTVVHTATKVAAVAPRGGGWRRG). The span at 8–18 (SESAINIPESN) shows a compositional bias: polar residues. A helical membrane pass occupies residues 47-67 (VSIFDFILRICALAAALAATA). Residues 68–96 (TMGTTDQTLPFFTQFFQFQASYDDLPAFT) lie on the Extracellular side of the membrane. The chain crosses the membrane as a helical span at residues 97-117 (FFVVANGIASGYLVLSLPFSI). Residues 118–129 (ATIVRPHAAAIK) are Cytoplasmic-facing. Residues 130 to 150 (LLLIIFDTVMVAFTAAAAAAA) traverse the membrane as a helical segment. The Extracellular segment spans residues 151–184 (AAIVYLAHNGNSKTNWFAICQQFNDFCQRVSGAV). The chain crosses the membrane as a helical span at residues 185–205 (VASFVAAVILIFLVVLSAVAI). The Cytoplasmic segment spans residues 206–208 (RKH).

The protein belongs to the Casparian strip membrane proteins (CASP) family. In terms of assembly, homodimer and heterodimers.

It is found in the cell membrane. Its function is as follows. Regulates membrane-cell wall junctions and localized cell wall deposition. Required for establishment of the Casparian strip membrane domain (CSD) and the subsequent formation of Casparian strips, a cell wall modification of the root endodermis that determines an apoplastic barrier between the intraorganismal apoplasm and the extraorganismal apoplasm and prevents lateral diffusion. The protein is Casparian strip membrane protein 2 of Triphysaria pusilla (Dwarf owl's-clover).